Here is a 118-residue protein sequence, read N- to C-terminus: Cysteine--tRNA ligase (118 aa).

Residue Cys28 participates in Zn(2+) binding. A 'HIGH' region motif is present at residues 30 to 40 (PTVYNYIHIGN).

This sequence belongs to the class-I aminoacyl-tRNA synthetase family. As to quaternary structure, monomer. Zn(2+) serves as cofactor.

The protein resides in the cytoplasm. The enzyme catalyses tRNA(Cys) + L-cysteine + ATP = L-cysteinyl-tRNA(Cys) + AMP + diphosphate. In Staphylococcus xylosus, this protein is Cysteine--tRNA ligase (cysS).